A 680-amino-acid polypeptide reads, in one-letter code: 1-deoxy-D-xylulose-5-phosphate synthase (680 aa).

Residues 1–17 (MQQSPHSPQSQSLSASA) are compositionally biased toward low complexity. The segment at 1-20 (MQQSPHSPQSQSLSASAVDS) is disordered. Thiamine diphosphate-binding positions include H113 and 154-156 (GHS). D185 is a binding site for Mg(2+). Residues 186–187 (GA), N214, F323, and E408 each bind thiamine diphosphate. N214 lines the Mg(2+) pocket.

It belongs to the transketolase family. DXPS subfamily. As to quaternary structure, homodimer. It depends on Mg(2+) as a cofactor. Thiamine diphosphate serves as cofactor.

It carries out the reaction D-glyceraldehyde 3-phosphate + pyruvate + H(+) = 1-deoxy-D-xylulose 5-phosphate + CO2. It functions in the pathway metabolic intermediate biosynthesis; 1-deoxy-D-xylulose 5-phosphate biosynthesis; 1-deoxy-D-xylulose 5-phosphate from D-glyceraldehyde 3-phosphate and pyruvate: step 1/1. Functionally, catalyzes the acyloin condensation reaction between C atoms 2 and 3 of pyruvate and glyceraldehyde 3-phosphate to yield 1-deoxy-D-xylulose-5-phosphate (DXP). The chain is 1-deoxy-D-xylulose-5-phosphate synthase from Psychrobacter cryohalolentis (strain ATCC BAA-1226 / DSM 17306 / VKM B-2378 / K5).